A 540-amino-acid chain; its full sequence is tRNA-2-methylthio-N(6)-dimethylallyladenosine synthase (540 aa).

The MTTase N-terminal domain occupies 41-157 (RTYEVRTFGC…LPTLLERSAH (117 aa)). [4Fe-4S] cluster contacts are provided by cysteine 50, cysteine 86, cysteine 120, cysteine 194, cysteine 198, and cysteine 201. In terms of domain architecture, Radical SAM core spans 180-416 (RESAYSGWVS…IALQERIQAE (237 aa)). A TRAM domain is found at 419-486 (KELVGTTQEL…PFFLIADGPL (68 aa)).

Belongs to the methylthiotransferase family. MiaB subfamily. Monomer. [4Fe-4S] cluster serves as cofactor.

It is found in the cytoplasm. It carries out the reaction N(6)-dimethylallyladenosine(37) in tRNA + (sulfur carrier)-SH + AH2 + 2 S-adenosyl-L-methionine = 2-methylsulfanyl-N(6)-dimethylallyladenosine(37) in tRNA + (sulfur carrier)-H + 5'-deoxyadenosine + L-methionine + A + S-adenosyl-L-homocysteine + 2 H(+). Functionally, catalyzes the methylthiolation of N6-(dimethylallyl)adenosine (i(6)A), leading to the formation of 2-methylthio-N6-(dimethylallyl)adenosine (ms(2)i(6)A) at position 37 in tRNAs that read codons beginning with uridine. This chain is tRNA-2-methylthio-N(6)-dimethylallyladenosine synthase, found in Corynebacterium urealyticum (strain ATCC 43042 / DSM 7109).